The chain runs to 245 residues: MAQAESSTEVVLVDIEGTTTSISFVHDVLFPYAKENAKDYLLETWQTDETKLIVKELQQLPHYTEYAANLATQPTLDAEAISRFVRYLIERDLKVTPLKTLQGLIWAKGYADGQLRGHVYEDVAGAFGKWHQDGIRIAVYSSGSVAAQKLIFQHSIAGDLLPHLSAHFDTHIGHKQQSESYTKIAESLQVQPQHVLFLTDVPQEAAAARAAGMLTTLLERPGNAPLSEEERKKFSSVADFTGIVV.

Residues Asp14 and Glu16 each contribute to the Mg(2+) site. Substrate-binding positions include 141-142 and Lys175; that span reads SS. Mg(2+) is bound at residue Asp200.

Belongs to the HAD-like hydrolase superfamily. MasA/MtnC family. In terms of assembly, monomer. Mg(2+) serves as cofactor.

It is found in the cytoplasm. The protein localises to the nucleus. It catalyses the reaction 5-methylsulfanyl-2,3-dioxopentyl phosphate + H2O = 1,2-dihydroxy-5-(methylsulfanyl)pent-1-en-3-one + phosphate. It participates in amino-acid biosynthesis; L-methionine biosynthesis via salvage pathway; L-methionine from S-methyl-5-thio-alpha-D-ribose 1-phosphate: step 3/6. The protein operates within amino-acid biosynthesis; L-methionine biosynthesis via salvage pathway; L-methionine from S-methyl-5-thio-alpha-D-ribose 1-phosphate: step 4/6. Functionally, bifunctional enzyme that catalyzes the enolization of 2,3-diketo-5-methylthiopentyl-1-phosphate (DK-MTP-1-P) into the intermediate 2-hydroxy-3-keto-5-methylthiopentenyl-1-phosphate (HK-MTPenyl-1-P), which is then dephosphorylated to form the acireductone 1,2-dihydroxy-3-keto-5-methylthiopentene (DHK-MTPene). The sequence is that of Enolase-phosphatase E1 from Drosophila grimshawi (Hawaiian fruit fly).